The chain runs to 95 residues: Embryonic abundant protein 1 (95 aa).

The segment covering 1–10 (MASGQQQQGR) has biased composition (polar residues). A disordered region spans residues 1–95 (MASGQQQQGR…IDESKYKTKS (95 aa)). Basic and acidic residues-rich tracts occupy residues 40 to 64 (AEGR…EMGR) and 75 to 95 (GGER…KTKS).

This sequence belongs to the small hydrophilic plant seed protein family. As to expression, expressed in dry seeds and immature embryos.

Functionally, em protein may act as a cytoplasm protectant during desiccation. The chain is Embryonic abundant protein 1 (EMP1) from Oryza sativa subsp. japonica (Rice).